The chain runs to 330 residues: MKIAIDAMGGDHAPKAVVLGAMKAIKEYSDLHITLVGKEEEIRQCLMSDERITILHTDEKIESTEEPVRAVRRKKQASMVLAAQQVKDGEADACISAGSTGALMAAGLFVVGRMEGIERPALSPTMPTVDGKGFVMLDVGANVDAKPIHLYQYAVMGSVYAEKVRGIENPRVGLLNVGTEDGKGNELSKQVFAMLKDAPINFVGNVESRDLLQGVADVVVCDGFTGNVALKSLEGTALALFSMLKEQLMSSFTSKLAAAVLKPKLMVLKDKMDYSEYGGAALFGLKAPVIKAHGSSNDQSIFSAIRQTREMVAKEVIPTISSVMEKESLQ.

The protein belongs to the PlsX family. As to quaternary structure, homodimer. Probably interacts with PlsY.

The protein localises to the cytoplasm. The enzyme catalyses a fatty acyl-[ACP] + phosphate = an acyl phosphate + holo-[ACP]. Its pathway is lipid metabolism; phospholipid metabolism. Functionally, catalyzes the reversible formation of acyl-phosphate (acyl-PO(4)) from acyl-[acyl-carrier-protein] (acyl-ACP). This enzyme utilizes acyl-ACP as fatty acyl donor, but not acyl-CoA. This is Phosphate acyltransferase from Bacillus cereus (strain ATCC 14579 / DSM 31 / CCUG 7414 / JCM 2152 / NBRC 15305 / NCIMB 9373 / NCTC 2599 / NRRL B-3711).